A 275-amino-acid polypeptide reads, in one-letter code: Translation initiation factor 2 subunit alpha (275 aa).

The S1 motif domain maps to Gly-12–Arg-83.

This sequence belongs to the eIF-2-alpha family. In terms of assembly, heterotrimer composed of an alpha, a beta and a gamma chain.

Its function is as follows. eIF-2 functions in the early steps of protein synthesis by forming a ternary complex with GTP and initiator tRNA. The sequence is that of Translation initiation factor 2 subunit alpha from Pyrococcus furiosus (strain ATCC 43587 / DSM 3638 / JCM 8422 / Vc1).